The chain runs to 85 residues: U4-theraphotoxin-Hhn1e (85 aa).

The signal sequence occupies residues 1–22; it reads MKVTLIAILTCAAVLVLHTTAA. The propeptide occupies 23–48; it reads EELEAESQLMEVGMPDTELAAVDEER. Cystine bridges form between Cys52-Cys66, Cys56-Cys77, and Cys71-Cys82.

Belongs to the neurotoxin 12 (Hwtx-2) family. 02 (Hwtx-2) subfamily. As to expression, expressed by the venom gland.

The protein resides in the secreted. Its function is as follows. Postsynaptic neurotoxin. The protein is U4-theraphotoxin-Hhn1e of Cyriopagopus hainanus (Chinese bird spider).